A 523-amino-acid polypeptide reads, in one-letter code: 2-isopropylmalate synthase (523 aa).

The Pyruvate carboxyltransferase domain maps to 5 to 267 (VIIFDTTLRD…HTAINHQEIW (263 aa)). Mn(2+) is bound by residues Asp-14, His-202, His-204, and Asn-238. Residues 392 to 523 (RLDYFSVQSS…QHNENNKETV (132 aa)) are regulatory domain.

Belongs to the alpha-IPM synthase/homocitrate synthase family. LeuA type 1 subfamily. In terms of assembly, homodimer. It depends on Mn(2+) as a cofactor.

The protein localises to the cytoplasm. It carries out the reaction 3-methyl-2-oxobutanoate + acetyl-CoA + H2O = (2S)-2-isopropylmalate + CoA + H(+). It participates in amino-acid biosynthesis; L-leucine biosynthesis; L-leucine from 3-methyl-2-oxobutanoate: step 1/4. In terms of biological role, catalyzes the condensation of the acetyl group of acetyl-CoA with 3-methyl-2-oxobutanoate (2-ketoisovalerate) to form 3-carboxy-3-hydroxy-4-methylpentanoate (2-isopropylmalate). This is 2-isopropylmalate synthase from Shigella dysenteriae serotype 1 (strain Sd197).